A 129-amino-acid polypeptide reads, in one-letter code: MKYFVVALALVAAFACIAESKPAESEHELAEVEEENELADLEDAVWLEHLADLSDLEEARGFFGNTWKKIKGKTDKIMLKKAVKIMVKKEGISKEEAQAKVDAMSKKQIRLYLLKHYGKKALQKASEKL.

An N-terminal signal peptide occupies residues 1–20 (MKYFVVALALVAAFACIAES). The propeptide occupies 21 to 60 (KPAESEHELAEVEEENELADLEDAVWLEHLADLSDLEEAR).

It belongs to the cationic peptide 06 (cytoinsectotoxin) family. As to expression, expressed by the venom gland.

It is found in the secreted. Functionally, insecticidal, cytolytic and antimicrobial peptide. Forms voltage-dependent, ion-permeable channels in membranes. At high concentration causes cell membrane lysis. In Lachesana tarabaevi (Spider), this protein is M-zodatoxin-Lt8j (cit 1-9).